The sequence spans 391 residues: 1-deoxy-D-xylulose 5-phosphate reductoisomerase (391 aa).

Position 109 (asparagine 109) interacts with NADPH. Lysine 110 contributes to the 1-deoxy-D-xylulose 5-phosphate binding site. Position 111 (glutamate 111) interacts with NADPH. Aspartate 135 is a binding site for Mn(2+). Residues serine 136, glutamate 137, serine 171, and histidine 194 each contribute to the 1-deoxy-D-xylulose 5-phosphate site. Glutamate 137 provides a ligand contact to Mn(2+). Glycine 200 contacts NADPH. 1-deoxy-D-xylulose 5-phosphate contacts are provided by serine 207, asparagine 212, arginine 213, and glutamate 216. Glutamate 216 provides a ligand contact to Mn(2+).

This sequence belongs to the DXR family. As to quaternary structure, homodimer. Requires Mg(2+) as cofactor. Mn(2+) is required as a cofactor.

The enzyme catalyses 2-C-methyl-D-erythritol 4-phosphate + NADP(+) = 1-deoxy-D-xylulose 5-phosphate + NADPH + H(+). It functions in the pathway isoprenoid biosynthesis; isopentenyl diphosphate biosynthesis via DXP pathway; isopentenyl diphosphate from 1-deoxy-D-xylulose 5-phosphate: step 1/6. In terms of biological role, catalyzes the NADPH-dependent rearrangement and reduction of 1-deoxy-D-xylulose-5-phosphate (DXP) to 2-C-methyl-D-erythritol 4-phosphate (MEP). The sequence is that of 1-deoxy-D-xylulose 5-phosphate reductoisomerase from Blochmanniella floridana.